Reading from the N-terminus, the 1663-residue chain is Cortactin-binding protein 2 (1663 aa).

Disordered stretches follow at residues 1 to 26, 203 to 225, 359 to 440, 454 to 478, and 497 to 615; these read MATDGASCEPDFSRAPEDAAGATAEA, KKKTSALEEELSTEKRRSTDMEA, QASH…LHPG, GNANDPDQNGNTTQSPPSRDVSPTS, and SRFT…PPKP. Residues 119 to 276 adopt a coiled-coil conformation; that stretch reads RKMQERMSTQ…EQLKRGSDSK (158 aa). Composition is skewed to polar residues over residues 385 to 396 and 418 to 435; these read GPSTDSAPDLTN and QSHSQAPLHSLHSPSANA. Arg-498 carries the asymmetric dimethylarginine modification. Residues 606–615 are compositionally biased toward pro residues; that stretch reads PTTPQLPPKP. 6 ANK repeats span residues 709 to 739, 743 to 772, 776 to 805, 809 to 838, 842 to 871, and 912 to 942; these read GRPTLLQQAAAQGNVTLLSMLLNEEGLDINY, DGHSALYSAAKNGHTDCVRLLLNAEAQVDA, NGFTPLCAAAAQGHFKCVELLTAYDADINH, GGQTPLYLACKNGNKECIKLLLEAGSDRSV, DGWTPLHAAVDTGNVDSVKLLMYHSAPARG, and EGWTAAHIAASKGFKNCLEILCRHAGLEPDR. Residues 1449–1490 are disordered; the sequence is KGENGTWRKVSTSPRKKSGHFSSPTWNKPDLNEEGIRNTTTS. At Ser-1524 the chain carries Phosphoserine. The tract at residues 1579–1663 is disordered; it reads VSEKEVSPLS…KNEQVEKPNK (85 aa). Positions 1586–1595 are enriched in polar residues; sequence PLSSHQTTEC. The segment covering 1624-1638 has biased composition (low complexity); it reads SQNTKRSSSSSNTRQ. Over residues 1645–1663 the composition is skewed to basic and acidic residues; sequence SKEEIWNLHKNEQVEKPNK.

Interacts with CTTN/cortactin SH3 domain. Interacts with STRN, STRN4/zinedin and MOB4/phocein; this interactions mediate the association with the STRIPAK core complex and may regulate dendritic spine distribution of the STRIPAK complex in hippocampal neurons. Activation of glutamate receptors weakens the interaction with STRN and STRN4.

It localises to the cytoplasm. The protein resides in the cell cortex. It is found in the cell projection. The protein localises to the dendritic spine. Functionally, regulates the dendritic spine distribution of CTTN/cortactin in hippocampal neurons, and thus controls dendritic spinogenesis and dendritic spine maintenance. Associates with the striatin-interacting phosphatase and kinase (STRIPAK) core complex to regulate dendritic spine distribution of the STRIPAK complex in hippocampal neurons. This chain is Cortactin-binding protein 2 (CTTNBP2), found in Rhinolophus ferrumequinum (Greater horseshoe bat).